The sequence spans 319 residues: HPr kinase/phosphorylase (319 aa).

Active-site residues include histidine 141 and lysine 162. Residue 156-163 coordinates ATP; it reads GNSGVGKS. Position 163 (serine 163) interacts with Mg(2+). Aspartate 180 functions as the Proton acceptor; for phosphorylation activity. Proton donor; for dephosphorylation activity in the catalytic mechanism. Residues 204 to 213 form an important for the catalytic mechanism of both phosphorylation and dephosphorylation region; it reads MEIRGIGIID. Glutamate 205 contributes to the Mg(2+) binding site. Residue arginine 246 is part of the active site. Residues 267–272 are important for the catalytic mechanism of dephosphorylation; that stretch reads PVKVGR.

It belongs to the HPrK/P family. Homohexamer. The cofactor is Mg(2+).

It carries out the reaction [HPr protein]-L-serine + ATP = [HPr protein]-O-phospho-L-serine + ADP + H(+). It catalyses the reaction [HPr protein]-O-phospho-L-serine + phosphate + H(+) = [HPr protein]-L-serine + diphosphate. Its function is as follows. Catalyzes the ATP- as well as the pyrophosphate-dependent phosphorylation of a specific serine residue in HPr, a phosphocarrier protein of the phosphoenolpyruvate-dependent sugar phosphotransferase system (PTS). HprK/P also catalyzes the pyrophosphate-producing, inorganic phosphate-dependent dephosphorylation (phosphorolysis) of seryl-phosphorylated HPr (P-Ser-HPr). The two antagonistic activities of HprK/P are regulated by several intracellular metabolites, which change their concentration in response to the absence or presence of rapidly metabolisable carbon sources (glucose, fructose, etc.) in the growth medium. Therefore, by controlling the phosphorylation state of HPr, HPrK/P is a sensor enzyme that plays a major role in the regulation of carbon metabolism and sugar transport: it mediates carbon catabolite repression (CCR), and regulates PTS-catalyzed carbohydrate uptake and inducer exclusion. The protein is HPr kinase/phosphorylase of Lactobacillus gasseri (strain ATCC 33323 / DSM 20243 / BCRC 14619 / CIP 102991 / JCM 1131 / KCTC 3163 / NCIMB 11718 / NCTC 13722 / AM63).